We begin with the raw amino-acid sequence, 64 residues long: Large ribosomal subunit protein bL33 (64 aa).

This sequence belongs to the bacterial ribosomal protein bL33 family.

The polypeptide is Large ribosomal subunit protein bL33 (Gloeothece citriformis (strain PCC 7424) (Cyanothece sp. (strain PCC 7424))).